The primary structure comprises 332 residues: Biotin synthase (332 aa).

Residues 46 to 275 (YYGKKVKLNM…SKEIRISGGR (230 aa)) form the Radical SAM core domain. [4Fe-4S] cluster contacts are provided by C64, C68, and C71. The [2Fe-2S] cluster site is built by C108, C140, C200, and R270.

The protein belongs to the radical SAM superfamily. Biotin synthase family. As to quaternary structure, homodimer. [4Fe-4S] cluster serves as cofactor. The cofactor is [2Fe-2S] cluster.

The catalysed reaction is (4R,5S)-dethiobiotin + (sulfur carrier)-SH + 2 reduced [2Fe-2S]-[ferredoxin] + 2 S-adenosyl-L-methionine = (sulfur carrier)-H + biotin + 2 5'-deoxyadenosine + 2 L-methionine + 2 oxidized [2Fe-2S]-[ferredoxin]. Its pathway is cofactor biosynthesis; biotin biosynthesis; biotin from 7,8-diaminononanoate: step 2/2. Its function is as follows. Catalyzes the conversion of dethiobiotin (DTB) to biotin by the insertion of a sulfur atom into dethiobiotin via a radical-based mechanism. The sequence is that of Biotin synthase from Lysinibacillus sphaericus (Bacillus sphaericus).